The chain runs to 158 residues: NADH-quinone oxidoreductase subunit B (158 aa).

Cysteine 37, cysteine 38, cysteine 102, and cysteine 132 together coordinate [4Fe-4S] cluster.

Belongs to the complex I 20 kDa subunit family. As to quaternary structure, NDH-1 is composed of 14 different subunits. Subunits NuoB, C, D, E, F, and G constitute the peripheral sector of the complex. It depends on [4Fe-4S] cluster as a cofactor.

The protein resides in the cell inner membrane. It catalyses the reaction a quinone + NADH + 5 H(+)(in) = a quinol + NAD(+) + 4 H(+)(out). In terms of biological role, NDH-1 shuttles electrons from NADH, via FMN and iron-sulfur (Fe-S) centers, to quinones in the respiratory chain. Couples the redox reaction to proton translocation (for every two electrons transferred, four hydrogen ions are translocated across the cytoplasmic membrane), and thus conserves the redox energy in a proton gradient. In Hydrogenovibrio crunogenus (strain DSM 25203 / XCL-2) (Thiomicrospira crunogena), this protein is NADH-quinone oxidoreductase subunit B.